Consider the following 188-residue polypeptide: Elongation factor P (188 aa).

An N6-(3,6-diaminohexanoyl)-5-hydroxylysine modification is found at lysine 34.

This sequence belongs to the elongation factor P family. May be beta-lysylated on the epsilon-amino group of Lys-34 by the combined action of EpmA and EpmB, and then hydroxylated on the C5 position of the same residue by EpmC (if this protein is present). Lysylation is critical for the stimulatory effect of EF-P on peptide-bond formation. The lysylation moiety may extend toward the peptidyltransferase center and stabilize the terminal 3-CCA end of the tRNA. Hydroxylation of the C5 position on Lys-34 may allow additional potential stabilizing hydrogen-bond interactions with the P-tRNA.

It is found in the cytoplasm. It functions in the pathway protein biosynthesis; polypeptide chain elongation. Functionally, involved in peptide bond synthesis. Alleviates ribosome stalling that occurs when 3 or more consecutive Pro residues or the sequence PPG is present in a protein, possibly by augmenting the peptidyl transferase activity of the ribosome. Modification of Lys-34 is required for alleviation. The protein is Elongation factor P of Pasteurella multocida (strain Pm70).